A 414-amino-acid chain; its full sequence is Dual-specificity RNA methyltransferase RlmN (414 aa).

Positions methionine 1 to aspartate 13 are enriched in polar residues. Residues methionine 1 to glutamine 22 form a disordered region. The Proton acceptor role is filled by glutamate 124. The region spanning threonine 134–aspartate 377 is the Radical SAM core domain. Cysteine 141 and cysteine 382 form a disulfide bridge. [4Fe-4S] cluster-binding residues include cysteine 148, cysteine 152, and cysteine 155. S-adenosyl-L-methionine is bound by residues glycine 204–glutamate 205, serine 236, serine 258–histidine 260, and asparagine 339. Cysteine 382 (S-methylcysteine intermediate) is an active-site residue.

It belongs to the radical SAM superfamily. RlmN family. It depends on [4Fe-4S] cluster as a cofactor.

The protein resides in the cytoplasm. It catalyses the reaction adenosine(2503) in 23S rRNA + 2 reduced [2Fe-2S]-[ferredoxin] + 2 S-adenosyl-L-methionine = 2-methyladenosine(2503) in 23S rRNA + 5'-deoxyadenosine + L-methionine + 2 oxidized [2Fe-2S]-[ferredoxin] + S-adenosyl-L-homocysteine. The catalysed reaction is adenosine(37) in tRNA + 2 reduced [2Fe-2S]-[ferredoxin] + 2 S-adenosyl-L-methionine = 2-methyladenosine(37) in tRNA + 5'-deoxyadenosine + L-methionine + 2 oxidized [2Fe-2S]-[ferredoxin] + S-adenosyl-L-homocysteine. In terms of biological role, specifically methylates position 2 of adenine 2503 in 23S rRNA and position 2 of adenine 37 in tRNAs. m2A2503 modification seems to play a crucial role in the proofreading step occurring at the peptidyl transferase center and thus would serve to optimize ribosomal fidelity. The chain is Dual-specificity RNA methyltransferase RlmN from Acinetobacter baylyi (strain ATCC 33305 / BD413 / ADP1).